We begin with the raw amino-acid sequence, 525 residues long: Neuropilin and tolloid-like protein 2 (525 aa).

Positions 1–22 (MALEQLCAVLKVLLITVLVVEG) are cleaved as a signal peptide. Over 23 to 347 (IAVAQKTQDG…GLFEQITKTH (325 aa)) the chain is Extracellular. 7 disulfides stabilise this stretch: Cys45–Cys72, Cys100–Cys122, Cys177–Cys207, Cys234–Cys256, Cys297–Cys309, Cys304–Cys322, and Cys316–Cys331. CUB domains are found at residues 45–159 (CGIW…YSFI) and 177–292 (CQFE…FTSF). The LDL-receptor class A domain maps to 296–332 (PCTSSTFFCHSNMCINNSLVCNGVQNCAYPWDENHCK). Residue Asn311 is glycosylated (N-linked (GlcNAc...) asparagine). Residues 348 to 368 (GTIIGITSGIVLVLLIISILV) traverse the membrane as a helical segment. At 369–525 (QVKQPRKKVM…SAQASISIDF (157 aa)) the chain is on the cytoplasmic side. Phosphoserine is present on Ser409.

As to quaternary structure, interacts with GRIK2 and GRIK3, but neither with AMPA-nor with NMDA-sensitive glutamate receptors. Post-translationally, N-glycosylated. In terms of tissue distribution, expressed in brain tissues, including cerebellar granule cells (at protein level).

The protein localises to the cell membrane. Accessory subunit of neuronal kainate-sensitive glutamate receptors, GRIK2 and GRIK3. Increases kainate-receptor channel activity, slowing the decay kinetics of the receptors, without affecting their expression at the cell surface, and increasing the open probability of the receptor channels. Modulates the agonist sensitivity of kainate receptors. Slows the decay of kainate receptor-mediated excitatory postsynaptic currents (EPSCs), thus directly influencing synaptic transmission. The chain is Neuropilin and tolloid-like protein 2 (Neto2) from Mus musculus (Mouse).